Reading from the N-terminus, the 96-residue chain is Muconolactone Delta-isomerase 1 (96 aa).

Belongs to the muconolactone Delta-isomerase family. In terms of assembly, homodecamer.

The catalysed reaction is (S)-muconolactone = (4,5-dihydro-5-oxofuran-2-yl)-acetate. The protein operates within aromatic compound metabolism; beta-ketoadipate pathway; 5-oxo-4,5-dihydro-2-furylacetate from catechol: step 3/3. This Acinetobacter lwoffii protein is Muconolactone Delta-isomerase 1 (catC1).